The sequence spans 202 residues: uncharacterized protein (202 aa).

The tract at residues 118 to 202 (SSVSPVSSKK…KVSGTKKVKA (85 aa)) is disordered. S121 carries the post-translational modification Phosphoserine. Composition is skewed to basic residues over residues 142–163 (EKSK…KSKR) and 186–202 (SSKS…KVKA).

It localises to the nucleus. Its subcellular location is the nucleolus. This is an uncharacterized protein from Schizosaccharomyces pombe (strain 972 / ATCC 24843) (Fission yeast).